The following is a 61-amino-acid chain: MSSTTSTINLSSLGSAINDVLNIIVQYLPVFVTVAVLFGIITYMTGGLGGLFSGITGIFGS.

Over 1-20 (MSSTTSTINLSSLGSAINDV) the chain is Extracellular. A helical transmembrane segment spans residues 21 to 41 (LNIIVQYLPVFVTVAVLFGII). The Cytoplasmic portion of the chain corresponds to 42-61 (TYMTGGLGGLFSGITGIFGS).

The protein localises to the host membrane. This is an uncharacterized protein from Acidianus filamentous virus 2 (isolate Italy/Pozzuoli) (AFV-2).